A 929-amino-acid chain; its full sequence is MGSNSGRTTKLPLVPLPKGSVLLPGITLRIPVSNRPDLANLLSTIVDRSAVAKRDGTAITFGCVPLSSPYLSKDGQRLIDDGSLDEDRREEFDMIDAGQSRKEDLFRHGTIGKVIGIQRRAYSEPALVVQGVQRFTIRRVLKERPFFEAEAVVHDEKVSGDAETVELFQQLRQLSRELLTLLRLSSLLPSPGSRLSPLIARKFELFITKSDVSHASRLADFMADVADSGFEEKLRILASLDVKIRLERVVEILTRQLQSIKSNVKVTTITTNSFPSSGFDINQIDPRDREILARKAMAGLSGLTPPGLSAGRNNDNDDKESNEVDELQQRLQEAQLSPEARKVADKELRRLRKMNPANAEYGVCRTYLENIADIPWTKMTEDQLGPETLKRARKQLDDDHYGLEKIKKRLLEYLAVLRLKQSTNRDVERQIESLSKELEASDGGDLEKEVPVLSETDRVAVETKLHMLKTRRMGDKSPILLLVGPPGVGKTSLARSVASSLGRKFHRISLGGVRDEAEIRGHRRTYVAAMPGLIVSGLKKVGVANPVFLLDEIDKVGGANFQGDPSAAMLEVLDPEQNHTFSDHYINIPIDLSKVLFIATANSLDTIPAPLLDRMETISLSGYTTVEKRHIAKRHLIPKQIRANGLSDGQVVLSDEVIDKIITSYTRESGVRNLERELGSVCRFKAVQFADAGDAGRLDAYNPVVSMDELEEILGIERFEEEIAEKHGRPGVVTGLVAYSTGGQGSILFIEVADMPGNGRVQLTGKLGDVLKESVEVALTWVKAHAFELGLTADPTEDIMKNRSLHVHCPSGAIPKDGPSAGLAHTMGLISLFTGKAVPPSVAMTGEVSLRGKVMPVGGIKEKLIGALRAGVKTVLLPHHNRKDVKDVPQEVSEGLEIVYVTHIWEAIRQVWPDAHWPGQHTHFIESRL.

Residues 11-257 (LPLVPLPKGS…RVVEILTRQL (247 aa)) enclose the Lon N-terminal domain. Residues 302–325 (GLTPPGLSAGRNNDNDDKESNEVD) form a disordered region. 484–491 (GPPGVGKT) serves as a coordination point for ATP. Residues 727-914 (HGRPGVVTGL…WEAIRQVWPD (188 aa)) form the Lon proteolytic domain. Catalysis depends on residues S820 and K863. The Microbody targeting signal motif lies at 927 to 929 (SRL).

The protein belongs to the peptidase S16 family.

It is found in the peroxisome matrix. It catalyses the reaction Hydrolysis of proteins in presence of ATP.. ATP-dependent serine protease that mediates the selective degradation of misfolded and unassembled polypeptides in the peroxisomal matrix. Necessary for type 2 peroxisome targeting signal (PTS2)-containing protein processing and facilitates peroxisome matrix protein import. The protein is Lon protease homolog 2, peroxisomal of Aspergillus niger (strain ATCC MYA-4892 / CBS 513.88 / FGSC A1513).